Reading from the N-terminus, the 962-residue chain is Putative RNA Helicase B962L (962 aa).

The Helicase ATP-binding domain maps to 43–229 (IPTSLADRVL…FGIGKENIIL (187 aa)). 56–63 (SRTGSGKS) contributes to the ATP binding site. Positions 167 to 170 (DEAH) match the DEAH box motif. Residues 253–459 (ACETALTIHK…TIKKNKEGVF (207 aa)) form the Helicase C-terminal domain. The chain crosses the membrane as a helical span at residues 521–541 (GYFWQAAISDIATILAVVSVA).

This sequence belongs to the DEAD box helicase family. DEAH subfamily.

Its subcellular location is the host membrane. The protein resides in the virion. The enzyme catalyses ATP + H2O = ADP + phosphate + H(+). The chain is Putative RNA Helicase B962L from African swine fever virus (isolate Tick/South Africa/Pretoriuskop Pr4/1996) (ASFV).